The primary structure comprises 279 residues: Bifunctional protein FolD (279 aa).

Residues 165-167, S190, and I231 contribute to the NADP(+) site; that span reads GRS.

The protein belongs to the tetrahydrofolate dehydrogenase/cyclohydrolase family. In terms of assembly, homodimer.

The enzyme catalyses (6R)-5,10-methylene-5,6,7,8-tetrahydrofolate + NADP(+) = (6R)-5,10-methenyltetrahydrofolate + NADPH. The catalysed reaction is (6R)-5,10-methenyltetrahydrofolate + H2O = (6R)-10-formyltetrahydrofolate + H(+). It functions in the pathway one-carbon metabolism; tetrahydrofolate interconversion. Catalyzes the oxidation of 5,10-methylenetetrahydrofolate to 5,10-methenyltetrahydrofolate and then the hydrolysis of 5,10-methenyltetrahydrofolate to 10-formyltetrahydrofolate. In Halalkalibacterium halodurans (strain ATCC BAA-125 / DSM 18197 / FERM 7344 / JCM 9153 / C-125) (Bacillus halodurans), this protein is Bifunctional protein FolD.